The chain runs to 261 residues: Glucose 1-dehydrogenase 3 (261 aa).

An NAD(+)-binding site is contributed by Val-11–Val-35. A substrate-binding site is contributed by Ser-145. Tyr-158 acts as the Proton acceptor in catalysis.

It belongs to the short-chain dehydrogenases/reductases (SDR) family. In terms of assembly, homotetramer.

The catalysed reaction is D-glucose + NAD(+) = D-glucono-1,5-lactone + NADH + H(+). It carries out the reaction D-glucose + NADP(+) = D-glucono-1,5-lactone + NADPH + H(+). In Priestia megaterium (Bacillus megaterium), this protein is Glucose 1-dehydrogenase 3 (gdhIII).